The following is a 485-amino-acid chain: Phosphoglucosamine mutase (485 aa).

The active-site Phosphoserine intermediate is the Ser133. Residues Ser133, Asp274, Asp276, and Asp278 each contribute to the Mg(2+) site. Ser133 carries the post-translational modification Phosphoserine.

The protein belongs to the phosphohexose mutase family. Mg(2+) serves as cofactor. In terms of processing, activated by phosphorylation.

It catalyses the reaction alpha-D-glucosamine 1-phosphate = D-glucosamine 6-phosphate. Functionally, catalyzes the conversion of glucosamine-6-phosphate to glucosamine-1-phosphate. The protein is Phosphoglucosamine mutase of Rippkaea orientalis (strain PCC 8801 / RF-1) (Cyanothece sp. (strain PCC 8801)).